We begin with the raw amino-acid sequence, 517 residues long: MQDVATEAAKRRTFAIISHPDAGKTTLTEKLLYYGGAIQMAGSVKGRKSKAHATSDWMAMEQERGISVTSSVMQFPYRERILNLLDTPGHGDFSEDTYRTLTAVDSALMVIDIAKGVEERTVQLMDVCRMRDTPITTFINKLDRDGRDPVEVLDEVESVLRIRCAPVTWPLGMGRGFRGVYHLHLDQVRLFMDREIIQGLDNPRLDELFPGEVDEWREQIELVREASDSFDPEAYLAGQLTPVYFGSAVNDFGIRELLDDFVEHAPAPRSRDAGREVRADEENFTGFVFKIQANMDPQHRDRIAFLRVCSGRFEPGMKLYQVRTGKNMKIPRATTFMASDRSHAETAAPGDIIGIHNHGTIIIGDAFTEGESLHFTGIPDFAPELFRRVVLRDPMRMKALQKGLEQLCEEGATQLFRPLLGSDWIVGAVGTLQFDVAAYRLQKEYGVECTFEGVQVYTARWVSAEDEKALQRFRDRNESALAWDGTGALAYLAPTRANLELTQERWPDIRFLATRDR.

Positions 9 to 269 constitute a tr-type G domain; sequence AKRRTFAIIS…DFVEHAPAPR (261 aa). GTP contacts are provided by residues 18–25, 86–90, and 140–143; these read SHPDAGKT, DTPGH, and NKLD.

This sequence belongs to the TRAFAC class translation factor GTPase superfamily. Classic translation factor GTPase family. PrfC subfamily.

Its subcellular location is the cytoplasm. Increases the formation of ribosomal termination complexes and stimulates activities of RF-1 and RF-2. It binds guanine nucleotides and has strong preference for UGA stop codons. It may interact directly with the ribosome. The stimulation of RF-1 and RF-2 is significantly reduced by GTP and GDP, but not by GMP. This is Peptide chain release factor 3 from Halorhodospira halophila (strain DSM 244 / SL1) (Ectothiorhodospira halophila (strain DSM 244 / SL1)).